Here is a 428-residue protein sequence, read N- to C-terminus: Enolase (428 aa).

(2R)-2-phosphoglycerate is bound at residue glutamine 164. Glutamate 208 functions as the Proton donor in the catalytic mechanism. Positions 245, 286, and 313 each coordinate Mg(2+). Lysine 338, arginine 367, serine 368, and lysine 389 together coordinate (2R)-2-phosphoglycerate. The Proton acceptor role is filled by lysine 338.

The protein belongs to the enolase family. Requires Mg(2+) as cofactor.

It localises to the cytoplasm. It is found in the secreted. The protein resides in the cell surface. It carries out the reaction (2R)-2-phosphoglycerate = phosphoenolpyruvate + H2O. The protein operates within carbohydrate degradation; glycolysis; pyruvate from D-glyceraldehyde 3-phosphate: step 4/5. Functionally, catalyzes the reversible conversion of 2-phosphoglycerate (2-PG) into phosphoenolpyruvate (PEP). It is essential for the degradation of carbohydrates via glycolysis. This is Enolase from Pyrococcus horikoshii (strain ATCC 700860 / DSM 12428 / JCM 9974 / NBRC 100139 / OT-3).